We begin with the raw amino-acid sequence, 638 residues long: Influenza virus NS1A-binding protein homolog (638 aa).

The BTB domain occupies 32–99; that stretch reads CDVKLQVCGH…AYTSQLKAET (68 aa). The BACK domain maps to 134–233; the sequence is GISCRNFVNT…YYSADHKLLD (100 aa). The interval 251–273 is disordered; the sequence is IQKKSPRENNHKNLISSSSGSLS. 6 Kelch repeats span residues 365–411, 412–459, 461–508, 509–555, 557–602, and 604–638; these read KLIA…VLMD, HLYV…ALNG, LYVV…ELGN, KIYI…VYDG, LLVV…AVGN, and IYAA…LCES.

Its subcellular location is the cytoplasm. It localises to the cytoskeleton. The protein localises to the nucleus. Functionally, plays a role in cell division and in the dynamic organization of the actin skeleton as a stabilizer of actin filaments by association with F-actin through Kelch repeats. This Xenopus laevis (African clawed frog) protein is Influenza virus NS1A-binding protein homolog (ivns1abp).